Consider the following 975-residue polypeptide: Macrophage colony-stimulating factor 1 receptor 1 (975 aa).

An N-terminal signal peptide occupies residues methionine 1–serine 17. Residues valine 18–serine 519 are Extracellular-facing. Ig-like C2-type domains lie at serine 34 to lysine 113, serine 125 to isoleucine 208, methionine 221 to valine 310, glycine 329 to lysine 407, and phenylalanine 404 to serine 513. 3 disulfide bridges follow: cysteine 49-cysteine 93, cysteine 140-cysteine 189, and cysteine 236-cysteine 292. N-linked (GlcNAc...) asparagine glycosylation is found at asparagine 156, asparagine 165, asparagine 246, asparagine 250, asparagine 289, asparagine 301, asparagine 399, asparagine 420, and asparagine 451. Residues cysteine 426 and cysteine 495 are joined by a disulfide bond. The helical transmembrane segment at threonine 520 to tyrosine 540 threads the bilayer. Over lysine 541–cysteine 975 the chain is Cytoplasmic. A regulatory juxtamembrane domain region spans residues glutamine 544–lysine 576. At tyrosine 563 the chain carries Phosphotyrosine; by autocatalysis. The region spanning leucine 584–leucine 918 is the Protein kinase domain. Residues leucine 590–valine 598 and lysine 619 contribute to the ATP site. Tyrosine 702 and tyrosine 726 each carry phosphotyrosine; by autocatalysis. The active-site Proton acceptor is aspartate 782. The segment at aspartate 800 to proline 822 is activation loop. 2 positions are modified to phosphotyrosine; by autocatalysis: tyrosine 813 and tyrosine 929. Positions glutamate 939–glutamate 963 are disordered. Over residues aspartate 944–aspartate 958 the composition is skewed to basic and acidic residues. Position 972 is a phosphotyrosine; by autocatalysis (tyrosine 972).

This sequence belongs to the protein kinase superfamily. Tyr protein kinase family. CSF-1/PDGF receptor subfamily. In terms of assembly, monomer. Homodimer. Interacts with CSF1. Post-translationally, autophosphorylated in response to CSF1 binding. autophosphorylation, leading to its degradation. Ubiquitinated. Becomes rapidly polyubiquitinated after autophosphorylation, leading to its degradation.

The protein resides in the cell membrane. The catalysed reaction is L-tyrosyl-[protein] + ATP = O-phospho-L-tyrosyl-[protein] + ADP + H(+). Present in an inactive conformation in the absence of bound ligand. CSF1 binding leads to dimerization and activation by autophosphorylation on tyrosine residues. Functionally, tyrosine-protein kinase that acts as a cell-surface receptor for CSF1 and plays an essential role in the regulation of survival, proliferation and differentiation of hematopoietic precursor cells, especially mononuclear phagocytes, such as macrophages and monocytes. Plays an important role in innate immunity and in inflammatory processes. Plays an important role in the regulation of osteoclast proliferation and differentiation, the regulation of bone resorption, and is required for normal bone development. Promotes reorganization of the actin cytoskeleton, regulates formation of membrane ruffles, cell adhesion and cell migration. Activates several signaling pathways in response to ligand binding. The protein is Macrophage colony-stimulating factor 1 receptor 1 (csf1r1) of Takifugu rubripes (Japanese pufferfish).